A 280-amino-acid polypeptide reads, in one-letter code: Acetyl-coenzyme A carboxylase carboxyl transferase subunit beta (280 aa).

Residues 26 to 280 form the CoA carboxyltransferase N-terminal domain; it reads LWQKCPRCGE…TKLLAWHSQK (255 aa). Cysteine 30, cysteine 33, cysteine 49, and cysteine 52 together coordinate Zn(2+). The C4-type zinc finger occupies 30–52; the sequence is CPRCGEIIFNKELEKNFKVCPKC.

Belongs to the AccD/PCCB family. Acetyl-CoA carboxylase is a heterohexamer composed of biotin carboxyl carrier protein (AccB), biotin carboxylase (AccC) and two subunits each of ACCase subunit alpha (AccA) and ACCase subunit beta (AccD). Zn(2+) serves as cofactor.

The protein localises to the cytoplasm. It catalyses the reaction N(6)-carboxybiotinyl-L-lysyl-[protein] + acetyl-CoA = N(6)-biotinyl-L-lysyl-[protein] + malonyl-CoA. It functions in the pathway lipid metabolism; malonyl-CoA biosynthesis; malonyl-CoA from acetyl-CoA: step 1/1. Component of the acetyl coenzyme A carboxylase (ACC) complex. Biotin carboxylase (BC) catalyzes the carboxylation of biotin on its carrier protein (BCCP) and then the CO(2) group is transferred by the transcarboxylase to acetyl-CoA to form malonyl-CoA. The polypeptide is Acetyl-coenzyme A carboxylase carboxyl transferase subunit beta (Carboxydothermus hydrogenoformans (strain ATCC BAA-161 / DSM 6008 / Z-2901)).